Reading from the N-terminus, the 228-residue chain is Calcyclin-binding protein (228 aa).

Met-1 is subject to N-acetylmethionine. Ala-2 bears the N-acetylalanine mark. The interval 2 to 80 (ASEELQKDLE…YTVKISNYGW (79 aa)) is interaction with SIAH1. The residue at position 3 (Ser-3) is a Phosphoserine. Lys-8 and Lys-19 each carry N6-acetyllysine. The residue at position 34 (Ser-34) is a Phosphoserine. Residues 73–167 (VKISNYGWDQ…VENTRWDYLT (95 aa)) form the CS domain. Positions 73-228 (VKISNYGWDQ…EKQAKGDTEF (156 aa)) are interaction with SKP1. N6-acetyllysine is present on residues Lys-85 and Lys-118. The tract at residues 154-228 (CRKKVENTRW…EKQAKGDTEF (75 aa)) is interaction with S100A6. The SGS domain maps to 168 to 228 (QVEKECKEKE…EKQAKGDTEF (61 aa)).

Homodimer. Interacts with proteins of the S100 family S100A1, S100A6, S100B, S100P and S100A12 in a calcium-dependent manner. Component of some large E3 complex at least composed of UBE2D1, SIAH1, CACYBP/SIP, SKP1, APC and TBL1X. Interacts directly with SIAH1, SIAH2 and SKP1. Post-translationally, phosphorylated on serine residues. Phosphorylated upon induction by RA or at high calcium concentrations.

The protein resides in the nucleus. Its subcellular location is the cytoplasm. Its function is as follows. May be involved in calcium-dependent ubiquitination and subsequent proteasomal degradation of target proteins. Probably serves as a molecular bridge in ubiquitin E3 complexes. Participates in the ubiquitin-mediated degradation of beta-catenin (CTNNB1). The protein is Calcyclin-binding protein (CACYBP) of Homo sapiens (Human).